A 378-amino-acid chain; its full sequence is Mitogen-activated protein kinase mpkC (378 aa).

Positions 20–300 (YVNPQPIGMG…AQDALRHPYL (281 aa)) constitute a Protein kinase domain. Residues 26–34 (IGMGSFGLV) and K49 contribute to the ATP site. D141 functions as the Proton acceptor in the catalytic mechanism.

It belongs to the protein kinase superfamily. Ser/Thr protein kinase family. MAP kinase subfamily. Requires Mg(2+) as cofactor.

The protein resides in the nucleus. It carries out the reaction L-seryl-[protein] + ATP = O-phospho-L-seryl-[protein] + ADP + H(+). The catalysed reaction is L-threonyl-[protein] + ATP = O-phospho-L-threonyl-[protein] + ADP + H(+). Activated by threonine and tyrosine phosphorylation. Its function is as follows. Mitogen-activated protein kinase (MAPK), part of the high-osmolarity glycerol (HOG) pathway. With sakA, plays a role in the osmotic and oxidative stress responses. Involved in paradoxical growth, the cell wall integrity (CWI) pathway and biofilm formation. SakA and mpkC collaborate during virulence and mpkC could act by modulating sakA activity upon exposure to several types of stresses and during cell wall biosynthesis. In Aspergillus fumigatus (strain CBS 144.89 / FGSC A1163 / CEA10) (Neosartorya fumigata), this protein is Mitogen-activated protein kinase mpkC.